The following is a 1193-amino-acid chain: Sperm-associated antigen 5 (1193 aa).

Residues 1 to 48 (MWRVKKLSLSLSPSPQTGKPSMRTPLRELTLQPGALTNSGKRSPACSS) form a disordered region. Residues S12, S14, S43, S62, and S66 each carry the phosphoserine modification. The segment covering 35 to 48 (ALTNSGKRSPACSS) has biased composition (polar residues). The disordered stretch occupies residues 96–117 (ESDEQPLDPIPQISSTPKTSEE). T111 carries the phosphothreonine; by GSK3-beta modification. Phosphoserine occurs at positions 135, 159, and 334. T336 is subject to Phosphothreonine. Phosphoserine occurs at positions 341, 353, and 362. The segment covering 390–405 (PSAPQEKSTNTSQTGL) has biased composition (polar residues). Residues 390–416 (PSAPQEKSTNTSQTGLVGTKHSTSETE) are disordered. Residues 482–850 (NKLQHLKESH…LKDTVENLTA (369 aa)) are interaction with KNSTRN. Coiled coils occupy residues 545 to 608 (CCFD…SMRE) and 759 to 868 (QLTQ…EKTR). At T937 the chain carries Phosphothreonine; by GSK3-beta. At S974 the chain carries Phosphoserine; by GSK3-beta. Residue T978 is modified to Phosphothreonine; by GSK3-beta. Positions 979 to 1174 (ELQSLCSLLQ…VQHIYKTLLS (196 aa)) form a coiled coil.

In terms of assembly, homodimer, with a globular head domain and a long stalk. Homooligomer; the globular head domains associate, resulting in aster-like structures. Binds to microtubules in the mitotic spindle. Interacts with DCLRE1B/Apollo. Part of an astrin (SPAG5)-kinastrin (SKAP) complex containing KNSTRN, SPAG5, PLK1, DYNLL1 and SGO2. Interacts with KNSTRN. Interacts with RPTOR; this interaction competes with RPTOR binding to MTOR, resulting in decreased mTORC1 formation. Interacts with G3BP1. The complex formed with G3BP1 AND RPTOR is increased by oxidative stress. Interacts with OSBPL8, PCM1 and CDK5RAP2. Interacts (via C-terminus) with NUMA1 (via C-terminus); this interaction promotes the recruitment of SPAG5 to the microtubules at spindle poles in a dynein-dynactin-dependent manner. Interacts with DYNLL1. In terms of processing, phosphorylated by AURKA. In terms of tissue distribution, highly expressed in testis. Detected at low levels in placenta, liver, pancreas, thymus and colon.

It is found in the cytoplasm. Its subcellular location is the cytoskeleton. The protein localises to the spindle. It localises to the spindle pole. The protein resides in the chromosome. It is found in the centromere. Its subcellular location is the kinetochore. The protein localises to the midbody. It localises to the microtubule organizing center. The protein resides in the centrosome. It is found in the cytoplasmic granule. Its subcellular location is the centriolar satellite. Essential component of the mitotic spindle required for normal chromosome segregation and progression into anaphase. Required for chromosome alignment, normal timing of sister chromatid segregation, and maintenance of spindle pole architecture. In complex with SKAP, promotes stable microtubule-kinetochore attachments. May contribute to the regulation of separase activity. May regulate AURKA localization to mitotic spindle, but not to centrosomes and CCNB1 localization to both mitotic spindle and centrosomes. Involved in centriole duplication. Required for CDK5RAP2, CEP152, WDR62 and CEP63 centrosomal localization and promotes the centrosomal localization of CDK2. In non-mitotic cells, upon stress induction, inhibits mammalian target of rapamycin complex 1 (mTORC1) association and recruits the mTORC1 component RPTOR to stress granules (SGs), thereby preventing mTORC1 hyperactivation-induced apoptosis. May enhance GSK3B-mediated phosphorylation of other substrates, such as MAPT/TAU. The sequence is that of Sperm-associated antigen 5 (SPAG5) from Homo sapiens (Human).